A 591-amino-acid polypeptide reads, in one-letter code: Peroxisome assembly protein 2 (591 aa).

The disordered stretch occupies residues 1–78 (MSDSDPKPTA…TNIDTNNNTN (78 aa)). Topologically, residues 1–148 (MSDSDPKPTA…TSREGTRPAF (148 aa)) are peroxisomal matrix. A compositionally biased stretch (low complexity) spans 7 to 26 (KPTAAKGAAPTSIPNSTRNP). Pro residues predominate over residues 27-54 (NPTPPNPNPNPNPISTPAPTPTATPSPP). Residues 55–78 (IASSSNNGNNSTRSTNIDTNNNTN) show a composition bias toward low complexity. The chain crosses the membrane as a helical span at residues 149 to 175 (RVGQVDAELLDEELVELLRGQVREALR). At 176–196 (YVGGGGGGGGGGGGGGVGSGV) the chain is on the cytoplasmic side. The chain crosses the membrane as a helical span at residues 197 to 222 (AQDWEAEISLALRAVLFKLTVWDHDA). Residues 223-246 (TYGAALQNLKYTDARRDGPALAPP) are Peroxisomal matrix-facing. Residues 247 to 273 (SRWQKALYGLVTVGGRYLWAKWEDWLL) form a helical membrane-spanning segment. The Cytoplasmic portion of the chain corresponds to 274-283 (EQDDGFEGPS). A helical transmembrane segment spans residues 284–314 (PRVKRLARWTSALSTLHASAALVSFLVFLLH). The Peroxisomal matrix segment spans residues 315-341 (GRYRTLLDRLLRMRLAPPTSQVSREVS). Residues 342-365 (FEYLNRQLVWHAFTEFLLFVLPLV) form a helical membrane-spanning segment. The Cytoplasmic segment spans residues 366–591 (GINRWRRWLA…EDGLDEDPES (226 aa)). Residues Cys408, Cys411, Cys449, Cys451, Cys454, Cys457, Cys472, and Cys475 each contribute to the Zn(2+) site. The RING-type; atypical zinc-finger motif lies at 408-475 (CAICYRDQNS…EGEGWPCLRC (68 aa)). The disordered stretch occupies residues 512 to 591 (KAPSDHEEEE…EDGLDEDPES (80 aa)). 2 stretches are compositionally biased toward acidic residues: residues 517–537 (HEEEENEEEEEQQGELGENEG) and 575–591 (SEDYEAEEDGLDEDPES).

It belongs to the pex2/pex10/pex12 family. Component of the PEX2-PEX10-PEX12 retrotranslocation channel, composed of PEX2, PEX10 and PEX12.

Its subcellular location is the peroxisome membrane. The enzyme catalyses [E2 ubiquitin-conjugating enzyme]-S-ubiquitinyl-L-cysteine + [acceptor protein]-L-cysteine = [E2 ubiquitin-conjugating enzyme]-L-cysteine + [acceptor protein]-S-ubiquitinyl-L-cysteine.. The protein operates within protein modification; protein ubiquitination. E3 ubiquitin-protein ligase component of a retrotranslocation channel required for peroxisome organization by mediating export of the PEX5 receptor from peroxisomes to the cytosol, thereby promoting PEX5 recycling. The retrotranslocation channel is composed of PEX2, PEX10 and PEX12; each subunit contributing transmembrane segments that coassemble into an open channel that specifically allows the passage of PEX5 through the peroxisomal membrane. PEX2 also regulates peroxisome organization by acting as a E3 ubiquitin-protein ligase. PEX2 ubiquitinates PEX5 during its passage through the retrotranslocation channel: catalyzes monoubiquitination of PEX5 at 'Cys-6', a modification that acts as a signal for PEX5 extraction into the cytosol. The chain is Peroxisome assembly protein 2 from Thermothelomyces thermophilus (strain ATCC 42464 / BCRC 31852 / DSM 1799) (Sporotrichum thermophile).